The sequence spans 31 residues: GTTVVAHKQQSVNRLLYKVTSHIPDTFFSLK.

It belongs to the tyrosinase family. Hemocyanin subfamily. As to expression, hemolymph.

It is found in the secreted. The protein localises to the extracellular space. Functionally, hemocyanins are copper-containing oxygen carriers occurring freely dissolved in the hemolymph of many mollusks and arthropods. This Homarus americanus (American lobster) protein is Hemocyanin subunit 1.